The sequence spans 69 residues: uncharacterized protein (69 aa).

The segment at 23-46 (AENEGNRKENRRQMQSRNERGCNV) is disordered. Over residues 26–44 (EGNRKENRRQMQSRNERGC) the composition is skewed to basic and acidic residues.

This is an uncharacterized protein from Homo sapiens (Human).